A 312-amino-acid polypeptide reads, in one-letter code: HPr kinase/phosphorylase (312 aa).

Catalysis depends on residues His-139 and Lys-160. 154–161 (GDSGIGKS) is an ATP binding site. Ser-161 lines the Mg(2+) pocket. Asp-178 serves as the catalytic Proton acceptor; for phosphorylation activity. Proton donor; for dephosphorylation activity. The tract at residues 202 to 211 (IEIRGVGIID) is important for the catalytic mechanism of both phosphorylation and dephosphorylation. Glu-203 is a Mg(2+) binding site. Residue Arg-244 is part of the active site. Residues 265-270 (PVKTGR) are important for the catalytic mechanism of dephosphorylation.

It belongs to the HPrK/P family. Homohexamer. Mg(2+) serves as cofactor.

It catalyses the reaction [HPr protein]-L-serine + ATP = [HPr protein]-O-phospho-L-serine + ADP + H(+). The catalysed reaction is [HPr protein]-O-phospho-L-serine + phosphate + H(+) = [HPr protein]-L-serine + diphosphate. In terms of biological role, catalyzes the ATP- as well as the pyrophosphate-dependent phosphorylation of a specific serine residue in HPr, a phosphocarrier protein of the phosphoenolpyruvate-dependent sugar phosphotransferase system (PTS). HprK/P also catalyzes the pyrophosphate-producing, inorganic phosphate-dependent dephosphorylation (phosphorolysis) of seryl-phosphorylated HPr (P-Ser-HPr). The two antagonistic activities of HprK/P are regulated by several intracellular metabolites, which change their concentration in response to the absence or presence of rapidly metabolisable carbon sources (glucose, fructose, etc.) in the growth medium. Therefore, by controlling the phosphorylation state of HPr, HPrK/P is a sensor enzyme that plays a major role in the regulation of carbon metabolism and sugar transport: it mediates carbon catabolite repression (CCR), and regulates PTS-catalyzed carbohydrate uptake and inducer exclusion. The chain is HPr kinase/phosphorylase from Streptococcus pneumoniae (strain ATCC BAA-255 / R6).